The following is a 356-amino-acid chain: Outer membrane protein Omp38 (356 aa).

The signal sequence occupies residues 1–19 (MKLSRIALATMLVAAPLAA). Residues 221–339 (ELTEDLNMEL…RVFATITGSR (119 aa)) form the OmpA-like domain. The meso-2,6-diaminopimelate site is built by Asn-237, Asp-271, Thr-273, Asn-279, and Arg-286.

Belongs to the outer membrane OOP (TC 1.B.6) superfamily. Homotrimer. Forms a pore with a size of 1.3 nm.

The protein localises to the cell outer membrane. The protein resides in the host mitochondrion. In terms of biological role, functions as a porin. Induces apoptosis in human cell lines through caspase-dependent and AIF-dependent pathways. Purified Omp38 enters host cell and localizes to the mitochondria, which presumably leads to a release of proapoptotic molecules such as cytochrome c and AIF (apoptosis-inducing factor). Binds peptidoglycan, contributes to cell wall maintenance. The protein is Outer membrane protein Omp38 of Acinetobacter baumannii (strain ATCC 19606 / DSM 30007 / JCM 6841 / CCUG 19606 / CIP 70.34 / NBRC 109757 / NCIMB 12457 / NCTC 12156 / 81).